A 428-amino-acid chain; its full sequence is Putative ankyrin repeat protein FPV234 (428 aa).

ANK repeat units lie at residues 6 to 35 (KDDI…DPNV), 39 to 68 (YQYS…DPNI), 71 to 100 (FFTP…IVNL), 103 to 132 (YCLK…DINS), 137 to 169 (NGKY…DINK), 174 to 202 (TNTS…NINI), 206 to 238 (MGRN…DINA), and 242 to 271 (EGNT…YLSY).

The protein is Putative ankyrin repeat protein FPV234 of Fowlpox virus (strain NVSL) (FPV).